The following is a 106-amino-acid chain: MNEYHNSLKSKESVKDERQQKLQPPSMYQVILNNDDYTPMEFVVDVLRKFFSYDIERATQLMLDVHYQGKAVCGVYTAEVAETKAAQVNMYAKEYGHPLLCTLEKV.

The tract at residues 1–22 (MNEYHNSLKSKESVKDERQQKL) is disordered. The segment covering 9 to 20 (KSKESVKDERQQ) has biased composition (basic and acidic residues).

The protein belongs to the ClpS family. Binds to the N-terminal domain of the chaperone ClpA.

Functionally, involved in the modulation of the specificity of the ClpAP-mediated ATP-dependent protein degradation. The protein is ATP-dependent Clp protease adapter protein ClpS of Photorhabdus laumondii subsp. laumondii (strain DSM 15139 / CIP 105565 / TT01) (Photorhabdus luminescens subsp. laumondii).